The sequence spans 333 residues: DNA primase small subunit PriS (333 aa).

Residues Asp-96, Asp-98, and Asp-237 contribute to the active site.

The protein belongs to the eukaryotic-type primase small subunit family. Heterodimer of a small subunit (PriS) and a large subunit (PriL). Mg(2+) is required as a cofactor. It depends on Mn(2+) as a cofactor.

In terms of biological role, catalytic subunit of DNA primase, an RNA polymerase that catalyzes the synthesis of short RNA molecules used as primers for DNA polymerase during DNA replication. The small subunit contains the primase catalytic core and has DNA synthesis activity on its own. Binding to the large subunit stabilizes and modulates the activity, increasing the rate of DNA synthesis while decreasing the length of the DNA fragments, and conferring RNA synthesis capability. The DNA polymerase activity may enable DNA primase to also catalyze primer extension after primer synthesis. May also play a role in DNA repair. The polypeptide is DNA primase small subunit PriS (Thermoplasma volcanium (strain ATCC 51530 / DSM 4299 / JCM 9571 / NBRC 15438 / GSS1)).